Reading from the N-terminus, the 180-residue chain is ADP-ribosylation factor 4 (180 aa).

A lipid anchor (N-myristoyl glycine) is attached at Gly-2. GTP-binding positions include 24-31, 67-71, and 126-129; these read GLDAAGKT, DVGGQ, and NKQD. Ser-147 is modified (phosphoserine).

The protein belongs to the small GTPase superfamily. Arf family. Forms a complex containing RAB11A, ASAP1, RAB3IP, RAP11FIP3 and ARF4; the complex promotes preciliary trafficking; the complex binds to RHO in photoreceptor cells and promotes RHO ciliary transport.

The protein resides in the golgi apparatus. The protein localises to the membrane. GTP-binding protein that functions as an allosteric activator of the cholera toxin catalytic subunit, an ADP-ribosyltransferase. Involved in protein trafficking; may modulate vesicle budding and uncoating within the Golgi apparatus. Part of the ciliary targeting complex containing Rab11, ASAP1, Rabin8/RAB3IP, RAB11FIP3 and ARF4, which direct preciliary vesicle trafficking to mother centriole and ciliogenesis initiation. In Mus musculus (Mouse), this protein is ADP-ribosylation factor 4 (Arf4).